Consider the following 301-residue polypeptide: Isonocardicin synthase (301 aa).

As to quaternary structure, monomer.

The enzyme catalyses nocardicin G + S-adenosyl-L-methionine = isonocardicin C + S-methyl-5'-thioadenosine + H(+). The catalysed reaction is nocardicin E + S-adenosyl-L-methionine = isonocardicin A + S-methyl-5'-thioadenosine + H(+). Its pathway is antibiotic biosynthesis. Involved in the biosynthesis of the beta-lactam antibiotic nocardicin A. In the presence of S-adenosyl-L-methionine (AdoMet), catalyzes the transfer of a 3-amino-3-carboxypropyl group from AdoMet to nocardicin G, forming isonocardicin C. Can also catalyze the transformation of nocardicin E and F to isonocardicin A and B, respectively, but in vivo substrate is probably nocardicin G. The protein is Isonocardicin synthase of Nocardia uniformis subsp. tsuyamanensis.